Here is a 49-residue protein sequence, read N- to C-terminus: Large ribosomal subunit protein bL33 (49 aa).

It belongs to the bacterial ribosomal protein bL33 family.

In Heliobacterium modesticaldum (strain ATCC 51547 / Ice1), this protein is Large ribosomal subunit protein bL33.